Consider the following 321-residue polypeptide: Fe-S cluster assembly protein DRE2 (321 aa).

An N-terminal SAM-like domain region spans residues 1–131; that stretch reads MERMLLLSPP…KPDFGPENIV (131 aa). Positions 132-213 are linker; that stretch reads PLKLGKRKPV…EETLLDGEDM (82 aa). Positions 223, 234, 237, and 239 each coordinate [2Fe-2S] cluster. Positions 223-239 are fe-S binding site A; the sequence is CRPKAGKRRRACKDCTC. [4Fe-4S] cluster contacts are provided by cysteine 284, cysteine 287, cysteine 295, and cysteine 298. 2 short sequence motifs (cx2C motif) span residues 284 to 287 and 295 to 298; these read CGNC and CDGC. The fe-S binding site B stretch occupies residues 284 to 298; that stretch reads CGNCALGDAFRCDGC.

This sequence belongs to the anamorsin family. As to quaternary structure, monomer. Interacts with TAH18. Interacts with MIA40. Requires [2Fe-2S] cluster as cofactor. It depends on [4Fe-4S] cluster as a cofactor.

The protein resides in the cytoplasm. It localises to the mitochondrion intermembrane space. Its function is as follows. Component of the cytosolic iron-sulfur (Fe-S) protein assembly (CIA) machinery required for the maturation of extramitochondrial Fe-S proteins. Part of an electron transfer chain functioning in an early step of cytosolic Fe-S biogenesis, facilitating the de novo assembly of a [4Fe-4S] cluster on the scaffold complex CFD1-NBP35. Electrons are transferred to DRE2 from NADPH via the FAD- and FMN-containing protein TAH18. TAH18-DRE2 are also required for the assembly of the diferric tyrosyl radical cofactor of ribonucleotide reductase (RNR), probably by providing electrons for reduction during radical cofactor maturation in the catalytic small subunit RNR2. The chain is Fe-S cluster assembly protein DRE2 from Coccidioides posadasii (strain C735) (Valley fever fungus).